The following is a 224-amino-acid chain: RNA-free ribonuclease P (224 aa).

The protein belongs to the HARP family.

The catalysed reaction is Endonucleolytic cleavage of RNA, removing 5'-extranucleotides from tRNA precursor.. RNA-free RNase P that catalyzes the removal of the 5'-leader sequence from pre-tRNA to produce the mature 5'-terminus. In Haloarcula marismortui (strain ATCC 43049 / DSM 3752 / JCM 8966 / VKM B-1809) (Halobacterium marismortui), this protein is RNA-free ribonuclease P.